A 273-amino-acid chain; its full sequence is 4-hydroxy-tetrahydrodipicolinate reductase (273 aa).

NAD(+)-binding positions include 12 to 17 (GAGGRM) and E38. R39 is an NADP(+) binding site. NAD(+) contacts are provided by residues 102-104 (GTT) and 126-129 (AANF). Residue H159 is the Proton donor/acceptor of the active site. H160 provides a ligand contact to (S)-2,3,4,5-tetrahydrodipicolinate. K163 (proton donor) is an active-site residue. A (S)-2,3,4,5-tetrahydrodipicolinate-binding site is contributed by 169-170 (GT).

This sequence belongs to the DapB family. In terms of assembly, homotetramer.

It localises to the cytoplasm. It carries out the reaction (S)-2,3,4,5-tetrahydrodipicolinate + NAD(+) + H2O = (2S,4S)-4-hydroxy-2,3,4,5-tetrahydrodipicolinate + NADH + H(+). The catalysed reaction is (S)-2,3,4,5-tetrahydrodipicolinate + NADP(+) + H2O = (2S,4S)-4-hydroxy-2,3,4,5-tetrahydrodipicolinate + NADPH + H(+). Its pathway is amino-acid biosynthesis; L-lysine biosynthesis via DAP pathway; (S)-tetrahydrodipicolinate from L-aspartate: step 4/4. In terms of biological role, catalyzes the conversion of 4-hydroxy-tetrahydrodipicolinate (HTPA) to tetrahydrodipicolinate. The chain is 4-hydroxy-tetrahydrodipicolinate reductase from Escherichia coli O157:H7.